Reading from the N-terminus, the 438-residue chain is MASLRLSVLLVSVSWLLLLVSGLRAGPRTLVLMENINLRETHSLFFRSLSDRGFDLSFKTADDPSLSLIKYGEFLYDNLIIFSPSVEDFGGNINIETISSFIDGGGSVLVAASSDIGDPLRELGSECGIEFDEEKTAVIDHHNYDISDPGQHTLIVADSENLLKAPTIVGKTPLNPILFRGVGMVADPDNPLVLDILTGSSTSYSFFPDKPITQYPHAVGKNTLLIAGLQARNNARVVFSGSLDFFSDSFFNSAVQKAASGSNRYAKTGNYELAMALSRWVFKEEGVLRVGEVSHHRVGESSPPSAYTVTDLVEYSIVIEKLSDGKWVPFDGDDIQLEFVRIDPFVRTFLKKNGGKYSVQFKLPDVYGVFQFKVDYNRLGYTHLYSTTQISVRPLQHTQYERFIPSAYPYYASAFSVMFGLFIFSIVFLHMKEKEKSD.

Residues 1–25 (MASLRLSVLLVSVSWLLLLVSGLRA) form the signal peptide. At 26 to 408 (GPRTLVLMEN…QYERFIPSAY (383 aa)) the chain is on the lumenal side. A helical membrane pass occupies residues 409-429 (PYYASAFSVMFGLFIFSIVFL). The Cytoplasmic segment spans residues 430–438 (HMKEKEKSD).

The protein belongs to the DDOST 48 kDa subunit family. Component of the oligosaccharyltransferase (OST) complex.

It is found in the endoplasmic reticulum membrane. It participates in protein modification; protein glycosylation. In terms of biological role, subunit of the oligosaccharyl transferase (OST) complex that catalyzes the initial transfer of a defined glycan (Glc(3)Man(9)GlcNAc(2) in eukaryotes) from the lipid carrier dolichol-pyrophosphate to an asparagine residue within an Asn-X-Ser/Thr consensus motif in nascent polypeptide chains, the first step in protein N-glycosylation. N-glycosylation occurs cotranslationally and the complex associates with the Sec61 complex at the channel-forming translocon complex that mediates protein translocation across the endoplasmic reticulum (ER). All subunits are required for a maximal enzyme activity. Required for the assembly of both SST3A- and SS3B-containing OST complexes. In Xenopus laevis (African clawed frog), this protein is Dolichyl-diphosphooligosaccharide--protein glycosyltransferase 48 kDa subunit.